The chain runs to 115 residues: Double-headed protease inhibitor, submandibular gland (115 aa).

2 Kazal-like domains span residues 6–66 (IGRE…ACDI) and 67–115 (ECTE…HGEC). 6 cysteine pairs are disulfide-bonded: Cys12/Cys46, Cys24/Cys43, Cys32/Cys64, Cys68/Cys97, Cys75/Cys94, and Cys83/Cys115.

Its subcellular location is the secreted. Its function is as follows. This inhibitor is composed of two homologous actively inhibiting halves: one which inhibits trypsin, the other which inhibits elastase. In Canis lupus familiaris (Dog), this protein is Double-headed protease inhibitor, submandibular gland.